An 83-amino-acid polypeptide reads, in one-letter code: Protein kreg-1 (83 aa).

Residues Gly62–His83 form a disordered region.

Weakly expressed in the intestine, but expression is up-regulated in response to Cu(2+).

Its function is as follows. Plays a role in the stress response to heavy metals such as copper, probably in a fos-1/kgb-1-dependent manner. The protein is Protein kreg-1 of Caenorhabditis elegans.